Consider the following 134-residue polypeptide: Auxin-responsive protein SAUR40 (134 aa).

Belongs to the ARG7 family. In terms of assembly, interacts with and inhibits PP2C-D subfamily of type 2C phosphatases such as PP2C67/PP2C-D1.

Its subcellular location is the cytoplasm. Its function is as follows. Provide a mechanistic link between auxin and plasma membrane H(+)-ATPases (PM H(+)-ATPases, e.g. AHA1 and AHA2), and triggers PM H(+)-ATPases activity by promoting phosphorylation of their C-terminal autoinhibitory domain as a result of PP2C-D subfamily of type 2C phosphatases inhibition, thus leading to the acidification of the apoplast and the facilitation of solutes and water uptake to drive cell expansion. Plays a role in the regulation of cell expansion, root meristem patterning and auxin transport. The sequence is that of Auxin-responsive protein SAUR40 from Arabidopsis thaliana (Mouse-ear cress).